The sequence spans 570 residues: Molecular chaperone MKKS (570 aa).

192-199 contacts ATP; sequence GHIILGKS. The interval 198-370 is substrate-binding apical domain; that stretch reads KSLIVPLKGQ…FHLIPNEATI (173 aa).

Belongs to the TCP-1 chaperonin family. Component of a complex composed at least of MKKS, BBS10, BBS12, TCP1, CCT2, CCT3, CCT4, CCT5 and CCT8. Interacts with STUB1. Interacts with BBS2 (via coiled coil domain). Interacts with CCDC28B. Interacts with BBS12. Interacts with SMARCC1, a component of the SWI/SNF complexes; the interaction takes place predominantly in the cytoplasm and may modulate SMARCC1 location. Interacts with DLEC1.

The protein localises to the cytoplasm. Its subcellular location is the cytoskeleton. The protein resides in the microtubule organizing center. It localises to the centrosome. It is found in the cytosol. The protein localises to the nucleus. In terms of biological role, probable molecular chaperone that assists the folding of proteins upon ATP hydrolysis. Plays a role in the assembly of BBSome, a complex involved in ciliogenesis regulating transports vesicles to the cilia. May play a role in protein processing in limb, cardiac and reproductive system development. May play a role in cytokinesis. This Pongo abelii (Sumatran orangutan) protein is Molecular chaperone MKKS (MKKS).